The primary structure comprises 375 residues: Chaperone protein DnaJ (375 aa).

Residues 5-70 (DFYETLGVAK…QKRAAYDRYG (66 aa)) form the J domain. A CR-type zinc finger spans residues 136 to 214 (GKTAQIRVPT…CHGQGRVTEE (79 aa)). Positions 149, 152, 166, 169, 188, 191, 202, and 205 each coordinate Zn(2+). CXXCXGXG motif repeat units lie at residues 149 to 156 (CDVCSGSG), 166 to 173 (CGTCQGTG), 188 to 195 (CPTCHGRG), and 202 to 209 (CPKCHGQG).

The protein belongs to the DnaJ family. Homodimer. Zn(2+) is required as a cofactor.

The protein localises to the cytoplasm. In terms of biological role, participates actively in the response to hyperosmotic and heat shock by preventing the aggregation of stress-denatured proteins and by disaggregating proteins, also in an autonomous, DnaK-independent fashion. Unfolded proteins bind initially to DnaJ; upon interaction with the DnaJ-bound protein, DnaK hydrolyzes its bound ATP, resulting in the formation of a stable complex. GrpE releases ADP from DnaK; ATP binding to DnaK triggers the release of the substrate protein, thus completing the reaction cycle. Several rounds of ATP-dependent interactions between DnaJ, DnaK and GrpE are required for fully efficient folding. Also involved, together with DnaK and GrpE, in the DNA replication of plasmids through activation of initiation proteins. This is Chaperone protein DnaJ from Rhizobium johnstonii (strain DSM 114642 / LMG 32736 / 3841) (Rhizobium leguminosarum bv. viciae).